A 57-amino-acid polypeptide reads, in one-letter code: UPF0391 membrane protein Nham_2738 (57 aa).

Helical transmembrane passes span tryptophan 4–alanine 24 and isoleucine 30–leucine 50.

It belongs to the UPF0391 family.

Its subcellular location is the cell membrane. This chain is UPF0391 membrane protein Nham_2738, found in Nitrobacter hamburgensis (strain DSM 10229 / NCIMB 13809 / X14).